The chain runs to 305 residues: Elongation factor Ts, mitochondrial (305 aa).

The protein belongs to the EF-Ts family.

It is found in the mitochondrion. Associates with the EF-Tu.GDP complex and induces the exchange of GDP to GTP. It remains bound to the aminoacyl-tRNA.EF-Tu.GTP complex up to the GTP hydrolysis stage on the ribosome. The protein is Elongation factor Ts, mitochondrial (tsfm) of Danio rerio (Zebrafish).